We begin with the raw amino-acid sequence, 467 residues long: L-seryl-tRNA(Sec) selenium transferase (467 aa).

An N6-(pyridoxal phosphate)lysine modification is found at Lys298.

It belongs to the SelA family. It depends on pyridoxal 5'-phosphate as a cofactor.

The protein resides in the cytoplasm. The enzyme catalyses L-seryl-tRNA(Sec) + selenophosphate + H(+) = L-selenocysteinyl-tRNA(Sec) + phosphate. It functions in the pathway aminoacyl-tRNA biosynthesis; selenocysteinyl-tRNA(Sec) biosynthesis; selenocysteinyl-tRNA(Sec) from L-seryl-tRNA(Sec) (bacterial route): step 1/1. In terms of biological role, converts seryl-tRNA(Sec) to selenocysteinyl-tRNA(Sec) required for selenoprotein biosynthesis. This chain is L-seryl-tRNA(Sec) selenium transferase, found in Alkaliphilus oremlandii (strain OhILAs) (Clostridium oremlandii (strain OhILAs)).